A 282-amino-acid polypeptide reads, in one-letter code: ATP synthase gamma chain (282 aa).

Belongs to the ATPase gamma chain family. F-type ATPases have 2 components, CF(1) - the catalytic core - and CF(0) - the membrane proton channel. CF(1) has five subunits: alpha(3), beta(3), gamma(1), delta(1), epsilon(1). CF(0) has three main subunits: a, b and c.

The protein localises to the cell membrane. Produces ATP from ADP in the presence of a proton gradient across the membrane. The gamma chain is believed to be important in regulating ATPase activity and the flow of protons through the CF(0) complex. This is ATP synthase gamma chain from Clostridium botulinum (strain 657 / Type Ba4).